The sequence spans 240 residues: Carboxy-S-adenosyl-L-methionine synthase (240 aa).

S-adenosyl-L-methionine contacts are provided by residues Y35, 61–63 (GCS), 86–87 (DN), 112–113 (DI), and R194.

It belongs to the class I-like SAM-binding methyltransferase superfamily. Cx-SAM synthase family. In terms of assembly, homodimer.

The enzyme catalyses prephenate + S-adenosyl-L-methionine = carboxy-S-adenosyl-L-methionine + 3-phenylpyruvate + H2O. In terms of biological role, catalyzes the conversion of S-adenosyl-L-methionine (SAM) to carboxy-S-adenosyl-L-methionine (Cx-SAM). The polypeptide is Carboxy-S-adenosyl-L-methionine synthase (Wolinella succinogenes (strain ATCC 29543 / DSM 1740 / CCUG 13145 / JCM 31913 / LMG 7466 / NCTC 11488 / FDC 602W) (Vibrio succinogenes)).